The chain runs to 165 residues: UPF0262 protein blr1257 (165 aa).

Belongs to the UPF0262 family.

This is UPF0262 protein blr1257 from Bradyrhizobium diazoefficiens (strain JCM 10833 / BCRC 13528 / IAM 13628 / NBRC 14792 / USDA 110).